We begin with the raw amino-acid sequence, 515 residues long: UPF0053 protein BUsg_314 (515 aa).

7 helical membrane passes run 14–34 (LTLV…VAIL), 49–69 (IGLG…SWVV), 79–99 (NFFS…FLLF), 125–145 (FWAV…DAII), 150–170 (MVNQ…LMLL), 185–205 (VVVL…AEAL), and 207–227 (FYIP…IEIF). CBS domains lie at 309 to 368 (MTPR…NIDV) and 372 to 432 (ASQI…DADE).

This sequence belongs to the UPF0053 family.

It localises to the cell membrane. This is UPF0053 protein BUsg_314 from Buchnera aphidicola subsp. Schizaphis graminum (strain Sg).